We begin with the raw amino-acid sequence, 157 residues long: Transcription factor HES-2 (157 aa).

The bHLH domain occupies 13 to 70 (LRKNLKPLLEKRRRARINESLSQLKGLVLPLLGAETSRSSKLEKADILEMTVRFLQEQ). Residues 86–119 (YLEGYRACLARLARVLPACSVLEPAVSARLLEHL) form the Orange domain. A disordered region spans residues 124-157 (VSDDSPSLTLPPAPAPAPSPPVPPPGSSGLWRPW). Over residues 132-149 (TLPPAPAPAPSPPVPPPG) the composition is skewed to pro residues. Residues 154-157 (WRPW) carry the WRPW motif motif.

Transcription repression requires formation of a complex with a corepressor protein of the Groucho/TLE family.

Its subcellular location is the nucleus. In terms of biological role, transcriptional repressor of genes that require a bHLH protein for their transcription. In Mus musculus (Mouse), this protein is Transcription factor HES-2 (Hes2).